The sequence spans 418 residues: Centromere protein U (418 aa).

Over residues 1-11 (MAPRGRRRPRP) the composition is skewed to basic residues. Residues 1–76 (MAPRGRRRPR…TYETFDPPLH (76 aa)) form a disordered region. The short motif at 6–23 (RRRPRPHRSEGARRSKNT) is the Nuclear localization signal element. Residues 12–42 (HRSEGARRSKNTLERTHSMKDKAGQKCKPID) are compositionally biased toward basic and acidic residues. Thr-78 is subject to Phosphothreonine; by PLK1. A disordered region spans residues 88-227 (SKHCGLSLSS…KRKKSRSKAI (140 aa)). Thr-98 is modified (phosphothreonine). Phosphoserine is present on Ser-108. Position 110 is a phosphothreonine (Thr-110). 3 positions are modified to phosphoserine: Ser-111, Ser-116, and Ser-120. Positions 124 to 133 (SAKKPGRKLR) are enriched in basic residues. 3 positions are modified to phosphoserine: Ser-136, Ser-139, and Ser-141. Over residues 145-165 (SDTRRKVKSAEKISTQRHEVI) the composition is skewed to basic and acidic residues. Polar residues predominate over residues 180-193 (SVTSKKTGPLSAQP). Lys-185 is covalently cross-linked (Glycyl lysine isopeptide (Lys-Gly) (interchain with G-Cter in SUMO2)). Residues Ser-190 and Ser-194 each carry the phosphoserine modification. Residues 208-224 (TQKKGKISHDKRKKSRS) are compositionally biased toward basic residues. Ser-232 is modified (phosphoserine). Coiled-coil stretches lie at residues 297 to 356 (QMLT…NAAY) and 397 to 417 (LLGAESHLRNINHQLEKLLDQ). The Nuclear localization signal motif lies at 303–320 (KRKNAKMISDIEKKRQRM).

Belongs to the CENP-U/AME1 family. Component of the CENPA-NAC complex, at least composed of CENPA, CENPC, CENPH, CENPM, CENPN, CENPT and CENPU. The CENPA-NAC complex interacts with the CENPA-CAD complex, composed of CENPI, CENPK, CENPL, CENPO, CENPP, CENPQ, CENPR and CENPS. Interacts with MLF1. Interacts with PLK1. As to quaternary structure, (Microbial infection) Interacts with the N-terminal domain of Kaposi's sarcoma-associated herpesvirus latent nuclear antigen (LNA). Phosphorylated by PLK1 at Thr-78, creating a self-tethering site that specifically interacts with the polo-box domain of PLK1. As to expression, expressed at high levels in the testis, fetal liver, thymus, bone marrow and at lower levels in the lymph nodes, placenta, colon and spleen. Present in all cell lines examined, including B-cells, T-cells, epithelial cells and fibroblast cells. Expressed at high levels in glioblastoma cell lines.

The protein resides in the cytoplasm. Its subcellular location is the nucleus. It localises to the chromosome. It is found in the centromere. The protein localises to the kinetochore. In terms of biological role, component of the CENPA-NAC (nucleosome-associated) complex, a complex that plays a central role in assembly of kinetochore proteins, mitotic progression and chromosome segregation. The CENPA-NAC complex recruits the CENPA-CAD (nucleosome distal) complex and may be involved in incorporation of newly synthesized CENPA into centromeres. Plays an important role in the correct PLK1 localization to the mitotic kinetochores. A scaffold protein responsible for the initial recruitment and maintenance of the kinetochore PLK1 population until its degradation. Involved in transcriptional repression. The chain is Centromere protein U (CENPU) from Homo sapiens (Human).